Consider the following 190-residue polypeptide: Riboflavin transporter FmnP (190 aa).

At 1–5 (MKVKK) the chain is on the extracellular side. A helical membrane pass occupies residues 6–26 (LVVVSMLSSIAFVLMLLNFPF). The Cytoplasmic portion of the chain corresponds to 27–39 (PGLPDYLKIDFSD). The chain crosses the membrane as a helical span at residues 40–60 (VPAIIAILIYGPLAGIAVEAI). Residues 61–76 (KNVLQYIIQGSMAGVP) lie on the Extracellular side of the membrane. Residues 77–97 (VGQVANFIAGTLFILPTAFLF) traverse the membrane as a helical segment. The Cytoplasmic segment spans residues 98 to 109 (KKLNSAKGLAVS). The chain crosses the membrane as a helical span at residues 110–130 (LLLGTAAMTILMSILNYVLIL). Topologically, residues 131–154 (PAYTWFLHSPALSDSALKTAVVAG) are extracellular. A helical transmembrane segment spans residues 155 to 175 (ILPFNMIKGIVITVVFSLIFI). Over 176–190 (KLKPWIEQQRSAHIH) the chain is Cytoplasmic.

It belongs to the prokaryotic riboflavin transporter (P-RFT) (TC 2.A.87) family. As to quaternary structure, forms a stable energy-coupling factor (ECF) transporter complex composed of a membrane-embedded substrate-binding protein (S component), 2 ATP-binding proteins (A component) and 2 transmembrane proteins (T component). May be able to interact with more than 1 S component at a time.

The protein resides in the cell membrane. Inhibited by excess of riboflavin or FMN. Also inhibited by protonophores such as CCCP and FCCP or in the absence of glucose. Mediates uptake of riboflavin and roseoflavin, a toxic riboflavin analog; may also transport FMN. Probably a riboflavin-binding protein that interacts with the energy-coupling factor (ECF) ABC-transporter complex. Unlike classic ABC transporters this ECF transporter provides the energy necessary to transport a number of different substrates. The substrates themselves are bound by transmembrane, not extracytoplasmic soluble proteins. This Bacillus subtilis (strain 168) protein is Riboflavin transporter FmnP (fmnP).